The sequence spans 122 residues: Large ribosomal subunit protein uL14c (122 aa).

Belongs to the universal ribosomal protein uL14 family. As to quaternary structure, part of the 50S ribosomal subunit.

Its subcellular location is the plastid. It localises to the chloroplast. Binds to 23S rRNA. This chain is Large ribosomal subunit protein uL14c, found in Tupiella akineta (Green alga).